A 302-amino-acid polypeptide reads, in one-letter code: tRNA dimethylallyltransferase (302 aa).

9–16 (GPTGSGKT) contributes to the ATP binding site. 11–16 (TGSGKT) provides a ligand contact to substrate.

It belongs to the IPP transferase family. In terms of assembly, monomer. Mg(2+) is required as a cofactor.

The catalysed reaction is adenosine(37) in tRNA + dimethylallyl diphosphate = N(6)-dimethylallyladenosine(37) in tRNA + diphosphate. In terms of biological role, catalyzes the transfer of a dimethylallyl group onto the adenine at position 37 in tRNAs that read codons beginning with uridine, leading to the formation of N6-(dimethylallyl)adenosine (i(6)A). This Thermus thermophilus (strain ATCC BAA-163 / DSM 7039 / HB27) protein is tRNA dimethylallyltransferase.